We begin with the raw amino-acid sequence, 417 residues long: Gamma-glutamyl phosphate reductase (417 aa).

Belongs to the gamma-glutamyl phosphate reductase family.

It localises to the cytoplasm. It catalyses the reaction L-glutamate 5-semialdehyde + phosphate + NADP(+) = L-glutamyl 5-phosphate + NADPH + H(+). It functions in the pathway amino-acid biosynthesis; L-proline biosynthesis; L-glutamate 5-semialdehyde from L-glutamate: step 2/2. Catalyzes the NADPH-dependent reduction of L-glutamate 5-phosphate into L-glutamate 5-semialdehyde and phosphate. The product spontaneously undergoes cyclization to form 1-pyrroline-5-carboxylate. This chain is Gamma-glutamyl phosphate reductase, found in Escherichia coli (strain K12 / MC4100 / BW2952).